The following is a 142-amino-acid chain: Acidic phospholipase A2 PA4 (142 aa).

Positions 10, 12, and 14 each coordinate Ca(2+). 3 disulfide bridges follow: Cys-11-Cys-33, Cys-32-Cys-72, and Cys-39-Cys-65. The active site involves His-36. Residue Asp-37 coordinates Ca(2+).

Belongs to the phospholipase A2 family. Group III subfamily. The cofactor is Ca(2+). In terms of tissue distribution, expressed by the venom gland.

Its subcellular location is the secreted. The enzyme catalyses a 1,2-diacyl-sn-glycero-3-phosphocholine + H2O = a 1-acyl-sn-glycero-3-phosphocholine + a fatty acid + H(+). Its function is as follows. PLA2 catalyzes the calcium-dependent hydrolysis of the 2-acyl groups in 3-sn-phosphoglycerides. This Heloderma suspectum (Gila monster) protein is Acidic phospholipase A2 PA4.